Consider the following 569-residue polypeptide: ABC1 family protein MCP2 (569 aa).

The transit peptide at 1 to 18 (MMTKAFFNKLPFEVFRRY) directs the protein to the mitochondrion. At 19–34 (VRTGKSIPQRSPRTRK) the chain is on the mitochondrial matrix side. Residues 35–51 (SLLVGGTIASAVVLYNF) traverse the membrane as a helical segment. Residues 52–569 (NDTFHDSVKH…KFIPKTWLSS (518 aa)) are Mitochondrial intermembrane-facing.

The protein belongs to the protein kinase superfamily. ADCK protein kinase family.

It is found in the mitochondrion. The protein localises to the mitochondrion inner membrane. Functionally, component of MIOREX complexes, large expressome-like assemblies of ribosomes with factors involved in all the steps of post-transcriptional gene expression. Involved in mitochondrial lipid homeostasis. This Saccharomyces cerevisiae (strain ATCC 204508 / S288c) (Baker's yeast) protein is ABC1 family protein MCP2.